The following is a 366-amino-acid chain: Adenine DNA glycosylase (366 aa).

30–31 (WR) serves as a coordination point for DNA. Glutamate 43 (proton donor/acceptor) is an active-site residue. Residues 48–49 (QT), 86–88 (LGY), tyrosine 126, and glutamate 188 each bind DNA. One can recognise a HhH domain in the interval 105-133 (RYGGKVPDDPDEFSRLKGVGPYTVGAVLS). 4 residues coordinate [4Fe-4S] cluster: cysteine 198, cysteine 205, cysteine 208, and cysteine 214. Serine 308 serves as a coordination point for DNA.

The protein belongs to the Nth/MutY family. Requires [4Fe-4S] cluster as cofactor.

It catalyses the reaction Hydrolyzes free adenine bases from 7,8-dihydro-8-oxoguanine:adenine mismatched double-stranded DNA, leaving an apurinic site.. Its function is as follows. Base excision repair (BER) glycosylase that initiates repair of A:oxoG to C:G by removing the inappropriately paired adenine base from the DNA backbone, generating an abasic site product. 8-oxoguanine (oxoG) is a genotoxic DNA lesion resulting from oxidation of guanine; this residue is misread by replicative DNA polymerases, that insert adenine instead of cytosine opposite the oxidized damaged base. Shows a powerful dicrimination of A versus C, since it does not cleave cytosine in oxoG:C pairs. May also be able to remove adenine from A:G mispairs, although this activity may not be physiologically relevant. This Geobacillus stearothermophilus (Bacillus stearothermophilus) protein is Adenine DNA glycosylase.